The sequence spans 1450 residues: Actin cytoskeleton-regulatory complex protein PAN1 (1450 aa).

A disordered region spans residues 1 to 140; the sequence is MYSNPNNFFG…PPPPVKPQAT (140 aa). Low complexity-rich tracts occupy residues 15–37 and 59–71; these read GPGA…QQPD and PGLQ…LQPQ. A compositionally biased stretch (polar residues) spans 72–83; it reads FTGYGQTPQQGM. Positions 93 to 119 are enriched in low complexity; the sequence is IPQQYQQQFQQQQTQQQQPQQQQMPFA. Pro residues predominate over residues 120–136; it reads AAPPQPTQTLAPPPPVK. EH domains lie at 181–270 and 444–533; these read DQAK…VSSM and EKTR…STRN. EF-hand domains lie at 214–249 and 477–512; these read LDGD…CNLK and LEKP…IYRK. Disordered stretches follow at residues 600–625, 788–851, and 865–1450; these read RSSA…SNEE, SDQD…WEDA, and LQRS…RVLD. Residues 622-741 adopt a coiled-coil conformation; that stretch reads SNEELSLDQL…ELFRLKDAKA (120 aa). Positions 788–850 are enriched in basic and acidic residues; sequence SDQDAEKRLE…TEHEKRRWED (63 aa). The span at 902 to 924 shows a compositional bias: low complexity; that stretch reads SPASISRTASPAAPPAAGGSYSS. Residues 960 to 1148 are a coiled coil; the sequence is ETAAQRAERE…LEAMDDDSSS (189 aa). Composition is skewed to basic and acidic residues over residues 965–997, 1026–1101, and 1110–1140; these read RAER…RLAE, AKPD…EEEK, and EAKE…RQLE. Acidic residues predominate over residues 1141-1153; sequence AMDDDSSSDDEGP. Residues 1156–1169 show a composition bias toward polar residues; sequence ITPQASTPTMNDSH. Pro residues-rich tracts occupy residues 1178–1188 and 1222–1239; these read QPTPPPAPVVS and APAP…PPQP. Positions 1265 to 1275 are enriched in basic and acidic residues; that stretch reads RRPDDDGWGSD. Over residues 1276–1285 the composition is skewed to acidic residues; the sequence is KDEEDEESDD. A compositionally biased stretch (polar residues) spans 1314–1323; sequence GDKSATSPTV. Pro residues-rich tracts occupy residues 1327 to 1352, 1361 to 1375, and 1381 to 1411; these read VAPP…PMPG, PGAP…PPMP, and PGAP…PPAA. The 18-residue stretch at 1417 to 1434 folds into the WH2 domain; the sequence is RPAGLLGQIQAGKALKKT.

Belongs to the PAN1 family. Component of the PAN1 actin cytoskeleton-regulatory complex.

It localises to the cell membrane. It is found in the endosome membrane. The protein resides in the cytoplasm. Its subcellular location is the cytoskeleton. The protein localises to the actin patch. In terms of biological role, component of the PAN1 actin cytoskeleton-regulatory complex required for the internalization of endosomes during actin-coupled endocytosis. The complex links the site of endocytosis to the cell membrane-associated actin cytoskeleton. Mediates uptake of external molecules and vacuolar degradation of plasma membrane proteins. Plays a role in the proper organization of the cell membrane-associated actin cytoskeleton and promotes its destabilization. The protein is Actin cytoskeleton-regulatory complex protein PAN1 (PAN1) of Chaetomium globosum (strain ATCC 6205 / CBS 148.51 / DSM 1962 / NBRC 6347 / NRRL 1970) (Soil fungus).